A 1157-amino-acid polypeptide reads, in one-letter code: Cell division cycle and apoptosis regulator protein 1 (1157 aa).

Disordered regions lie at residues 289–365 (PVRI…PRRV) and 608–641 (LQGD…WSKL). Composition is skewed to basic and acidic residues over residues 300–341 (RRIE…DRSP) and 348–359 (ERSPRRERERSP). The stretch at 601-625 (KQQLVDKLQGDRKEADGEQEEEDKE) forms a coiled coil. The span at 617-628 (GEQEEEDKEDGD) shows a compositional bias: acidic residues. Residues 643 to 677 (PKIMKVNDLRKELESRTLSSKGLKSQLIARLTKQL) enclose the SAP domain. 4 stretches are compositionally biased toward basic and acidic residues: residues 685-694 (EQKELEKCEK), 701-721 (ERKS…ELER), 804-824 (EEKK…RKED), and 838-861 (SSDD…KEDY). Disordered regions lie at residues 685–721 (EQKE…ELER) and 804–926 (EEKK…KDKK). Residues 862–896 (REEDDPDYENQDDYEPIAAEEDDGDYDDREDDDDD) show a composition bias toward acidic residues. A compositionally biased stretch (basic and acidic residues) spans 897-926 (SSSKDKREDKRDGNRYSKERQSKDKEKDKK). Residues 1043–1128 (DVGSLLQKLE…DQLTNTIKNL (86 aa)) adopt a coiled-coil conformation. Residue Ser1157 is modified to Phosphoserine.

It is found in the cytoplasm. Its subcellular location is the perinuclear region. Transcriptional coactivator for nuclear receptors which may play an important role in regulating cell growth and apoptosis. This is Cell division cycle and apoptosis regulator protein 1 (ccar1) from Xenopus laevis (African clawed frog).